The primary structure comprises 273 residues: Transposable element Tc1 transposase (273 aa).

Belongs to the transposase 5 family.

The protein localises to the nucleus. Probably essential for transposable element Tc1 transposition. The insertion of Tc1 is the main cause of spontaneous mutations. It is an endonuclease which can produce a single strand nick at the 5'-end of the transposon. The polypeptide is Transposable element Tc1 transposase (tc1a) (Caenorhabditis elegans).